The following is an 87-amino-acid chain: Co-chaperonin GroES (87 aa).

Belongs to the GroES chaperonin family. In terms of assembly, heptamer of 7 subunits arranged in a ring. Interacts with the chaperonin GroEL.

It localises to the cytoplasm. Its function is as follows. Together with the chaperonin GroEL, plays an essential role in assisting protein folding. The GroEL-GroES system forms a nano-cage that allows encapsulation of the non-native substrate proteins and provides a physical environment optimized to promote and accelerate protein folding. GroES binds to the apical surface of the GroEL ring, thereby capping the opening of the GroEL channel. This is Co-chaperonin GroES from Campylobacter hominis (strain ATCC BAA-381 / DSM 21671 / CCUG 45161 / LMG 19568 / NCTC 13146 / CH001A).